Here is a 399-residue protein sequence, read N- to C-terminus: F-box/kelch-repeat protein At5g48980 (399 aa).

A compositionally biased stretch (polar residues) spans 1 to 11 (MADSQRLSTAS). The tract at residues 1–29 (MADSQRLSTASGVKDGQPPWKKKKLSNDT) is disordered. Residues 29 to 75 (TTSNPSLPYDVILIILARVSRSYYTNLSLVSKSFRSILTSPELYKTR) form the F-box domain. A Kelch repeat occupies 199 to 248 (IVYLPGSFESPDSLNCVEVYNTMTQTWKPVPPEKRMFKLENLEKKIYYKS).

The polypeptide is F-box/kelch-repeat protein At5g48980 (Arabidopsis thaliana (Mouse-ear cress)).